The sequence spans 344 residues: L-lactate dehydrogenase B (344 aa).

Residues 62–67 (DALPDK) and Arg109 each bind NAD(+). Residues Arg116, Asn148, and Arg179 each contribute to the substrate site. An NAD(+)-binding site is contributed by Asn148. Catalysis depends on His203, which acts as the Proton acceptor. Thr258 lines the substrate pocket.

It belongs to the LDH/MDH superfamily. LDH family. In terms of assembly, tetramer that arise from random association of LDH-A and LDH-B.

The enzyme catalyses (S)-lactate + NAD(+) = pyruvate + NADH + H(+). Its pathway is fermentation; pyruvate fermentation to lactate; (S)-lactate from pyruvate: step 1/1. The sequence is that of L-lactate dehydrogenase B from Hordeum vulgare (Barley).